Here is a 320-residue protein sequence, read N- to C-terminus: Lipoyl synthase (320 aa).

[4Fe-4S] cluster-binding residues include Cys67, Cys72, Cys78, Cys93, Cys97, Cys100, and Ser307. Positions 79-296 constitute a Radical SAM core domain; the sequence is FNHGTATFMI…RDKAEKMGFE (218 aa).

It belongs to the radical SAM superfamily. Lipoyl synthase family. [4Fe-4S] cluster is required as a cofactor.

Its subcellular location is the cytoplasm. The catalysed reaction is [[Fe-S] cluster scaffold protein carrying a second [4Fe-4S](2+) cluster] + N(6)-octanoyl-L-lysyl-[protein] + 2 oxidized [2Fe-2S]-[ferredoxin] + 2 S-adenosyl-L-methionine + 4 H(+) = [[Fe-S] cluster scaffold protein] + N(6)-[(R)-dihydrolipoyl]-L-lysyl-[protein] + 4 Fe(3+) + 2 hydrogen sulfide + 2 5'-deoxyadenosine + 2 L-methionine + 2 reduced [2Fe-2S]-[ferredoxin]. It functions in the pathway protein modification; protein lipoylation via endogenous pathway; protein N(6)-(lipoyl)lysine from octanoyl-[acyl-carrier-protein]: step 2/2. Its function is as follows. Catalyzes the radical-mediated insertion of two sulfur atoms into the C-6 and C-8 positions of the octanoyl moiety bound to the lipoyl domains of lipoate-dependent enzymes, thereby converting the octanoylated domains into lipoylated derivatives. This Histophilus somni (strain 129Pt) (Haemophilus somnus) protein is Lipoyl synthase.